Here is a 348-residue protein sequence, read N- to C-terminus: MAEQQKGLTYADAGVDIDAGNALVERIKPAAKRTARPGTVSGLGGFGALFDLKAAGYHDPVLVAATDGVGTKLRIAIDTGEVDTIGIDLVAMCVNDLVCQGAEPLFFLDYFATGKLEVAQAARIIEGIAEGCAASGCALIGGETAEMPGMYHKGDFDLAGFAVGAMERGADLPQGVAEGDVLLGLGSNGVHSNGYSFVRKVVELSGLGWDAPAPFGGDSLGRALLAPTRLYVKQALAAVRAGGVHALAHITGGGLTENLPRVLPEGLGARIDLSAWELPPVFRWLAETASMAEPELLKTFNCGIGMIVVVAADRADEIAALLAAEGETVTRIGEVIAGEGVSYDGRLL.

The protein belongs to the AIR synthase family.

The protein localises to the cytoplasm. The enzyme catalyses 2-formamido-N(1)-(5-O-phospho-beta-D-ribosyl)acetamidine + ATP = 5-amino-1-(5-phospho-beta-D-ribosyl)imidazole + ADP + phosphate + H(+). It functions in the pathway purine metabolism; IMP biosynthesis via de novo pathway; 5-amino-1-(5-phospho-D-ribosyl)imidazole from N(2)-formyl-N(1)-(5-phospho-D-ribosyl)glycinamide: step 2/2. In Cereibacter sphaeroides (strain ATCC 17029 / ATH 2.4.9) (Rhodobacter sphaeroides), this protein is Phosphoribosylformylglycinamidine cyclo-ligase.